Reading from the N-terminus, the 267-residue chain is Formamidopyrimidine-DNA glycosylase (267 aa).

The active-site Schiff-base intermediate with DNA is proline 2. Glutamate 3 functions as the Proton donor in the catalytic mechanism. Lysine 58 functions as the Proton donor; for beta-elimination activity in the catalytic mechanism. Residues histidine 91, arginine 110, and arginine 152 each contribute to the DNA site. An FPG-type zinc finger spans residues 233-267 (DVYGRGHGTCTSCGGALEAVRLGNRSTVFCPRCQQ). Arginine 257 functions as the Proton donor; for delta-elimination activity in the catalytic mechanism.

The protein belongs to the FPG family. In terms of assembly, monomer. Zn(2+) is required as a cofactor.

It catalyses the reaction Hydrolysis of DNA containing ring-opened 7-methylguanine residues, releasing 2,6-diamino-4-hydroxy-5-(N-methyl)formamidopyrimidine.. The catalysed reaction is 2'-deoxyribonucleotide-(2'-deoxyribose 5'-phosphate)-2'-deoxyribonucleotide-DNA = a 3'-end 2'-deoxyribonucleotide-(2,3-dehydro-2,3-deoxyribose 5'-phosphate)-DNA + a 5'-end 5'-phospho-2'-deoxyribonucleoside-DNA + H(+). Involved in base excision repair of DNA damaged by oxidation or by mutagenic agents. Acts as a DNA glycosylase that recognizes and removes damaged bases. Has a preference for oxidized purines, such as 7,8-dihydro-8-oxoguanine (8-oxoG). Has AP (apurinic/apyrimidinic) lyase activity and introduces nicks in the DNA strand. Cleaves the DNA backbone by beta-delta elimination to generate a single-strand break at the site of the removed base with both 3'- and 5'-phosphates. This is Formamidopyrimidine-DNA glycosylase from Pelobacter propionicus (strain DSM 2379 / NBRC 103807 / OttBd1).